The chain runs to 911 residues: Protein argonaute 4B (911 aa).

Disordered stretches follow at residues 1–51 (MDAH…RPGL) and 149–171 (KTAANGSPGGNDSPGGSDRKRVR). Residues 281-396 (PVIDFLLANQ…FPIELCSLIP (116 aa)) form the PAZ domain. Residues 565–872 (FLLCLLPERK…AAAQVGTFLK (308 aa)) enclose the Piwi domain.

It belongs to the argonaute family. Ago subfamily.

In terms of biological role, probably involved in the RNA silencing pathway. May bind to short RNAs such as microRNAs (miRNAs) or short interfering RNAs (siRNAs), and represses the translation of mRNAs which are complementary to them. The chain is Protein argonaute 4B (AGO4B) from Oryza sativa subsp. japonica (Rice).